A 111-amino-acid chain; its full sequence is PCNA-associated factor (111 aa).

Positions 1–10 (MVRTKANSVP) are enriched in polar residues. Positions 1 to 111 (MVRTKANSVP…PPDHTDDEKE (111 aa)) are disordered. S8 carries the post-translational modification Phosphoserine. K15 is covalently cross-linked (Glycyl lysine isopeptide (Lys-Gly) (interchain with G-Cter in ubiquitin)). The D-box motif lies at 23 to 34 (RKVLGSSTSAAN). N6-acetyllysine; alternate is present on K24. Residue K24 forms a Glycyl lysine isopeptide (Lys-Gly) (interchain with G-Cter in ubiquitin); alternate linkage. A compositionally biased stretch (polar residues) spans 27–39 (GSSTSAANSTPLS). 3 positions are modified to phosphoserine: S28, S31, and S72. A PIP-box motif is present at residues 62 to 72 (QKGIGEFFSLS). The span at 74-84 (KDSEKENRIPE) shows a compositional bias: basic and acidic residues. Residues 78 to 80 (KEN) carry the KEN box motif. Positions 85 to 97 (EAGSSGLGKAKRK) match the Initiation motif motif.

Interacts (when monoubiquitinated at Lys-15 and Lys-24) with PCNA. Interacts with isoform 2/p33ING1b of ING1. Interacts with BRCA1. Monoubiquitinated at Lys-15 and Lys-24 during normal S phase, promoting its association with PCNA. Also diubiquitinated at these 2 sites. Following DNA damage, monoubiquitin chains at Lys-15 and Lys-24 are probably extended, leading to disrupt the interaction with PCNA. Polyubiquitinated by the APC/C complex at the mitotic exit, leading to its degradation by the proteasome.

The protein localises to the nucleus. The protein resides in the cytoplasm. It is found in the perinuclear region. Its function is as follows. PCNA-binding protein that acts as a regulator of DNA repair during DNA replication. Following DNA damage, the interaction with PCNA is disrupted, facilitating the interaction between monoubiquitinated PCNA and the translesion DNA synthesis DNA polymerase eta (POLH) at stalled replisomes, facilitating the bypass of replication-fork-blocking lesions. Also acts as a regulator of centrosome number. The polypeptide is PCNA-associated factor (Bos taurus (Bovine)).